The chain runs to 359 residues: Hereditary hemochromatosis protein homolog (359 aa).

Residues 1 to 24 (MSLSAGLPVRPLLLLLLLLWSVAP) form the signal peptide. The segment at 25 to 126 (QALPPRSHSL…KVTKLGVVSE (102 aa)) is alpha-1. At 25 to 318 (QALPPRSHSL…WEPLQSQAMI (294 aa)) the chain is on the extracellular side. Asn114, Asn142, Asn166, and Asn246 each carry an N-linked (GlcNAc...) asparagine glycan. The segment at 127-217 (SHILQVVLGC…ELGRGVLGQQ (91 aa)) is alpha-2. 2 disulfide bridges follow: Cys136-Cys199 and Cys237-Cys294. The segment at 218 to 309 (VPTLVKVTRH…GLDQPLTASW (92 aa)) is alpha-3. An Ig-like C1-type domain is found at 219 to 308 (PTLVKVTRHW…PGLDQPLTAS (90 aa)). Residues 310–318 (EPLQSQAMI) form a connecting peptide region. The chain crosses the membrane as a helical span at residues 319-339 (IGIISGVTVCAIFLVGILFLI). Over 340-359 (LRKRKASGGTMGGYVLTDCE) the chain is Cytoplasmic.

Belongs to the MHC class I family. In terms of assembly, binds TFR through the extracellular domain in a pH-dependent manner.

Its subcellular location is the cell membrane. In terms of biological role, binds to transferrin receptor (TFR) and reduces its affinity for iron-loaded transferrin. In Mus musculus (Mouse), this protein is Hereditary hemochromatosis protein homolog (Hfe).